Reading from the N-terminus, the 212-residue chain is ATP-dependent Clp protease proteolytic subunit (212 aa).

Residue serine 106 is the Nucleophile of the active site. Residue histidine 131 is part of the active site.

The protein belongs to the peptidase S14 family. As to quaternary structure, fourteen ClpP subunits assemble into 2 heptameric rings which stack back to back to give a disk-like structure with a central cavity, resembling the structure of eukaryotic proteasomes.

It is found in the cytoplasm. The catalysed reaction is Hydrolysis of proteins to small peptides in the presence of ATP and magnesium. alpha-casein is the usual test substrate. In the absence of ATP, only oligopeptides shorter than five residues are hydrolyzed (such as succinyl-Leu-Tyr-|-NHMec, and Leu-Tyr-Leu-|-Tyr-Trp, in which cleavage of the -Tyr-|-Leu- and -Tyr-|-Trp bonds also occurs).. Functionally, cleaves peptides in various proteins in a process that requires ATP hydrolysis. Has a chymotrypsin-like activity. Plays a major role in the degradation of misfolded proteins. The protein is ATP-dependent Clp protease proteolytic subunit of Rhodopseudomonas palustris (strain ATCC BAA-98 / CGA009).